A 249-amino-acid chain; its full sequence is Probable hydroxyacylglutathione hydrolase ECU02_0580 (249 aa).

Zn(2+) is bound by residues His-75, His-77, Asp-79, His-80, His-126, Asp-144, and His-183. Residues 183–185 (HDY) and 240–243 (RERK) each bind substrate.

The protein belongs to the metallo-beta-lactamase superfamily. Glyoxalase II family. Zn(2+) serves as cofactor.

The protein localises to the cytoplasm. The protein resides in the nucleus. The catalysed reaction is an S-(2-hydroxyacyl)glutathione + H2O = a 2-hydroxy carboxylate + glutathione + H(+). It functions in the pathway secondary metabolite metabolism; methylglyoxal degradation; (R)-lactate from methylglyoxal: step 2/2. Functionally, thiolesterase that catalyzes the hydrolysis of S-D-lactoyl-glutathione to form glutathione and D-lactic acid. The polypeptide is Probable hydroxyacylglutathione hydrolase ECU02_0580 (Encephalitozoon cuniculi (strain GB-M1) (Microsporidian parasite)).